Here is a 903-residue protein sequence, read N- to C-terminus: Alanine--tRNA ligase (903 aa).

4 residues coordinate Zn(2+): histidine 591, histidine 595, cysteine 695, and histidine 699.

It belongs to the class-II aminoacyl-tRNA synthetase family. Zn(2+) is required as a cofactor.

Its subcellular location is the cytoplasm. It carries out the reaction tRNA(Ala) + L-alanine + ATP = L-alanyl-tRNA(Ala) + AMP + diphosphate. In terms of biological role, catalyzes the attachment of alanine to tRNA(Ala) in a two-step reaction: alanine is first activated by ATP to form Ala-AMP and then transferred to the acceptor end of tRNA(Ala). Also edits incorrectly charged Ser-tRNA(Ala) and Gly-tRNA(Ala) via its editing domain. This is Alanine--tRNA ligase from Methanosphaera stadtmanae (strain ATCC 43021 / DSM 3091 / JCM 11832 / MCB-3).